The sequence spans 325 residues: Gamma-hemolysin component B (325 aa).

An N-terminal signal peptide occupies residues 1–25; that stretch reads MNMNKLVKSSVATSMALLLLSNTAN.

The protein belongs to the aerolysin family. In terms of assembly, toxicity requires sequential binding and synergistic association of a class S and a class F component which form heterooligomeric complexes. HlgB (class F) associates with either hlgA thus forming an AB toxin or with hlgC thus forming a CB toxin. Interacts with host AMFR.

In terms of biological role, toxin that seems to act by forming pores in the membrane of the cell. Has a hemolytic and a leucotoxic activity. Promotes host AMFR-mediated inflammation by mediating 'Lys-27'-linked ubiquitination of TAB3, TAK1-TAB3 complex formation and phosphorylation of TAK1/MAP3K7. In turn, activates host NF-kappa-B signaling pathway. The sequence is that of Gamma-hemolysin component B (hlgB) from Staphylococcus aureus (strain MRSA252).